The sequence spans 200 residues: Glycerol-3-phosphate acyltransferase (200 aa).

5 consecutive transmembrane segments (helical) span residues 3 to 23 (YIYS…FFIA), 50 to 70 (FYGA…VFLV), 75 to 95 (IKFM…SIFL), 109 to 129 (VFLA…LFIV), and 134 to 154 (YVSL…FFAG).

Belongs to the PlsY family. In terms of assembly, probably interacts with PlsX.

The protein localises to the cell inner membrane. The enzyme catalyses an acyl phosphate + sn-glycerol 3-phosphate = a 1-acyl-sn-glycero-3-phosphate + phosphate. It participates in lipid metabolism; phospholipid metabolism. In terms of biological role, catalyzes the transfer of an acyl group from acyl-phosphate (acyl-PO(4)) to glycerol-3-phosphate (G3P) to form lysophosphatidic acid (LPA). This enzyme utilizes acyl-phosphate as fatty acyl donor, but not acyl-CoA or acyl-ACP. The protein is Glycerol-3-phosphate acyltransferase of Thermosipho melanesiensis (strain DSM 12029 / CIP 104789 / BI429).